Here is a 250-residue protein sequence, read N- to C-terminus: Small ribosomal subunit protein uS2 (250 aa).

This sequence belongs to the universal ribosomal protein uS2 family.

The sequence is that of Small ribosomal subunit protein uS2 from Paraburkholderia phymatum (strain DSM 17167 / CIP 108236 / LMG 21445 / STM815) (Burkholderia phymatum).